The chain runs to 351 residues: Thiamine-phosphate synthase (351 aa).

The tract at residues 1-129 (MVEPYSQQKQ…GQACKQMRYR (129 aa)) is unknown. Residues 130–351 (VYSLETNLMG…SQLNRIKPES (222 aa)) form a thiamine-phosphate synthase region. Residues 177 to 181 (QYRDK) and N209 contribute to the 4-amino-2-methyl-5-(diphosphooxymethyl)pyrimidine site. D210 and D229 together coordinate Mg(2+). Residue S248 coordinates 4-amino-2-methyl-5-(diphosphooxymethyl)pyrimidine. Residue 274–276 (TPT) participates in 2-[(2R,5Z)-2-carboxy-4-methylthiazol-5(2H)-ylidene]ethyl phosphate binding. 4-amino-2-methyl-5-(diphosphooxymethyl)pyrimidine is bound at residue K277. Residue G304 coordinates 2-[(2R,5Z)-2-carboxy-4-methylthiazol-5(2H)-ylidene]ethyl phosphate.

It belongs to the thiamine-phosphate synthase family. It depends on Mg(2+) as a cofactor.

The catalysed reaction is 2-[(2R,5Z)-2-carboxy-4-methylthiazol-5(2H)-ylidene]ethyl phosphate + 4-amino-2-methyl-5-(diphosphooxymethyl)pyrimidine + 2 H(+) = thiamine phosphate + CO2 + diphosphate. The enzyme catalyses 2-(2-carboxy-4-methylthiazol-5-yl)ethyl phosphate + 4-amino-2-methyl-5-(diphosphooxymethyl)pyrimidine + 2 H(+) = thiamine phosphate + CO2 + diphosphate. It carries out the reaction 4-methyl-5-(2-phosphooxyethyl)-thiazole + 4-amino-2-methyl-5-(diphosphooxymethyl)pyrimidine + H(+) = thiamine phosphate + diphosphate. It participates in cofactor biosynthesis; thiamine diphosphate biosynthesis; thiamine phosphate from 4-amino-2-methyl-5-diphosphomethylpyrimidine and 4-methyl-5-(2-phosphoethyl)-thiazole: step 1/1. Condenses 4-methyl-5-(beta-hydroxyethyl)thiazole monophosphate (THZ-P) and 2-methyl-4-amino-5-hydroxymethyl pyrimidine pyrophosphate (HMP-PP) to form thiamine monophosphate (TMP). This Nostoc sp. (strain PCC 7120 / SAG 25.82 / UTEX 2576) protein is Thiamine-phosphate synthase.